A 350-amino-acid polypeptide reads, in one-letter code: Protein RecA (350 aa).

66 to 73 (GPESSGKT) contacts ATP.

It belongs to the RecA family.

Its subcellular location is the cytoplasm. Can catalyze the hydrolysis of ATP in the presence of single-stranded DNA, the ATP-dependent uptake of single-stranded DNA by duplex DNA, and the ATP-dependent hybridization of homologous single-stranded DNAs. It interacts with LexA causing its activation and leading to its autocatalytic cleavage. The chain is Protein RecA from Dichelobacter nodosus (strain VCS1703A).